The sequence spans 256 residues: Spheroidene monooxygenase (256 aa).

Residues 1–23 are compositionally biased toward low complexity; it reads MTNELSNAAGASQQGPAASSFSA. The interval 1 to 26 is disordered; that stretch reads MTNELSNAAGASQQGPAASSFSADTP.

Belongs to the CrtA family. Heme is required as a cofactor.

It carries out the reaction spheroidene + 4 reduced [2Fe-2S]-[ferredoxin] + 2 O2 + 4 H(+) = spheroiden-2-one + 4 oxidized [2Fe-2S]-[ferredoxin] + 3 H2O. The catalysed reaction is spirilloxanthin + 4 reduced [2Fe-2S]-[ferredoxin] + 2 O2 + 4 H(+) = 2-oxospirilloxanthin + 4 oxidized [2Fe-2S]-[ferredoxin] + 3 H2O. It catalyses the reaction 2-oxospirilloxanthin + 4 reduced [2Fe-2S]-[ferredoxin] + 2 O2 + 4 H(+) = 2,2'-dioxospirilloxanthin + 4 oxidized [2Fe-2S]-[ferredoxin] + 3 H2O. The enzyme catalyses spheroidene + 2 reduced [2Fe-2S]-[ferredoxin] + O2 + 2 H(+) = 2-hydroxyspheroidene + 2 oxidized [2Fe-2S]-[ferredoxin] + H2O. It carries out the reaction 2-hydroxyspheroidene + 2 reduced [2Fe-2S]-[ferredoxin] + O2 + 2 H(+) = 2,2-dihydroxyspheroidene + 2 oxidized [2Fe-2S]-[ferredoxin] + H2O. The catalysed reaction is 2,2-dihydroxyspheroidene = spheroiden-2-one + H2O. It catalyses the reaction spirilloxanthin + 2 reduced [2Fe-2S]-[ferredoxin] + O2 + 2 H(+) = 2-hydroxyspirilloxanthin + 2 oxidized [2Fe-2S]-[ferredoxin] + H2O. The enzyme catalyses 2-hydroxyspirilloxanthin + 2 reduced [2Fe-2S]-[ferredoxin] + O2 + 2 H(+) = 2,2-dihydroxyspirilloxanthin + 2 oxidized [2Fe-2S]-[ferredoxin] + H2O. It carries out the reaction 2,2-dihydroxyspirilloxanthin = 2-oxospirilloxanthin + H2O. The catalysed reaction is 2-oxospirilloxanthin + 2 reduced [2Fe-2S]-[ferredoxin] + O2 + 2 H(+) = 2'-hydroxy-2-oxospirilloxanthin + 2 oxidized [2Fe-2S]-[ferredoxin] + H2O. It catalyses the reaction 2'-hydroxy-2-oxospirilloxanthin + 2 reduced [2Fe-2S]-[ferredoxin] + O2 + 2 H(+) = 2',2'-dihydroxy-2-oxospirilloxanthin + 2 oxidized [2Fe-2S]-[ferredoxin] + H2O. The enzyme catalyses 2',2'-dihydroxy-2-oxospirilloxanthin = 2,2'-dioxospirilloxanthin + H2O. Its pathway is carotenoid biosynthesis; spheroidene biosynthesis. It participates in carotenoid biosynthesis; spirilloxanthin biosynthesis. Involved in the biosynthesis of the carotenoids spheroidene and spirilloxanthin. Catalyzes the introduction of one keto group at the C-2 position of spheroidene and two keto groups at the C-2 and C-2' positions of spirilloxanthin. This Rubrivivax gelatinosus (Rhodocyclus gelatinosus) protein is Spheroidene monooxygenase.